A 174-amino-acid polypeptide reads, in one-letter code: uncharacterized protein (174 aa).

This is an uncharacterized protein from Caenorhabditis elegans.